The sequence spans 379 residues: Retinoic acid receptor RXR-alpha-B (379 aa).

The span at 1-22 shows a compositional bias: polar residues; it reads MPVPEQKQTVQLSSPMNAVSSS. Residues 1–24 form a disordered region; the sequence is MPVPEQKQTVQLSSPMNAVSSSED. Residues 1–53 are modulating; sequence MPVPEQKQTVQLSSPMNAVSSSEDIKPPLGLNGVMKVPAHRIGTLSLSLTKHI. Positions 51–126 form a DNA-binding region, nuclear receptor; sequence KHICAICGDR…MGMKREAVQE (76 aa). Zn(2+) contacts are provided by cysteine 54, cysteine 57, cysteine 71, and cysteine 74. The segment at 54–74 adopts an NR C4-type zinc-finger fold; the sequence is CAICGDRSSGKHYGVYSCEGC. Positions 79-84 are nuclear localization signal; it reads KRTVRK. 4 residues coordinate Zn(2+): cysteine 90, cysteine 96, cysteine 106, and cysteine 109. The NR C4-type zinc-finger motif lies at 90 to 109; that stretch reads CRDNKDCMIDKRQRNRCQYC. The hinge stretch occupies residues 120–141; the sequence is KREAVQEERQRAKERSEAEFGG. The region spanning 144–375 is the NR LBD domain; the sequence is NEDMPVEKIL…TFLMEMLEAP (232 aa). Arginine 233 and alanine 244 together coordinate 9-cis-retinoate. 2 residues coordinate all-trans-retinoate: arginine 233 and alanine 244. The segment at 265–285 is required for nuclear export; sequence RVLTELVSKMRDMQMDKTELG. An AF-2 region spans residues 364–375; the sequence is IDTFLMEMLEAP.

The protein belongs to the nuclear hormone receptor family. NR2 subfamily. Homodimer. Heterodimer; with a rar molecule. Binds DNA preferentially as a rar/rxr heterodimer. In terms of tissue distribution, uniform expression from the blastula to mid-gastrula stages. At 12 hours post-fertilization (hpf), expressed strongly in the tail and weakly elsewhere. At 24 hpf, weak expression in the forebrain, eyes and pharyngeal endoderm and continued expression in the tail mesoderm. At 48 hpf, anterior expression limited to ventral cells underlying the head, medial expression in the pectoral fin bud mesoderm and continued tail expression.

Its subcellular location is the nucleus. In terms of biological role, receptor for retinoic acid that acts as a transcription factor. Forms homo- or heterodimers with retinoic acid receptors (rars) and binds to target response elements in response to their ligands, all-trans or 9-cis retinoic acid, to regulate gene expression in various biological processes. The rar/rxr heterodimers bind to the retinoic acid response elements (RARE) composed of tandem 5'-AGGTCA-3' sites known as DR1-DR5 to regulate transcription. The high affinity ligand for rxrs is 9-cis retinoic acid. In the absence of ligand, the rar/rxr heterodimers associate with a multiprotein complex containing transcription corepressors that induce histone deacetylation, chromatin condensation and transcriptional suppression. On ligand binding, the corepressors dissociate from the receptors and coactivators are recruited leading to transcriptional activation. The polypeptide is Retinoic acid receptor RXR-alpha-B (rxrab) (Danio rerio (Zebrafish)).